The primary structure comprises 121 residues: Large ribosomal subunit protein uL18 (121 aa).

The protein belongs to the universal ribosomal protein uL18 family. Part of the 50S ribosomal subunit; part of the 5S rRNA/L5/L18/L25 subcomplex. Contacts the 5S and 23S rRNAs.

Its function is as follows. This is one of the proteins that bind and probably mediate the attachment of the 5S RNA into the large ribosomal subunit, where it forms part of the central protuberance. In Mesomycoplasma hyopneumoniae (strain J / ATCC 25934 / NCTC 10110) (Mycoplasma hyopneumoniae), this protein is Large ribosomal subunit protein uL18.